The following is a 478-amino-acid chain: Dynein regulatory complex subunit 4 (478 aa).

Positions 1 to 12 are enriched in basic residues; it reads MAPKKKGKKGKA. Positions 1-29 are disordered; it reads MAPKKKGKKGKAKGTAIVDGVAPEDMTKE. The segment at 1–114 is regulates microtubule-binding; sequence MAPKKKGKKG…LLYEHQNNLA (114 aa). Coiled-coil stretches lie at residues 24–207 and 242–426; these read EDMT…RKTE and LNNL…ELAR. The segment at 115–258 is microtubule-binding; that stretch reads EVKAEGTVVM…NSLKEQMEDM (144 aa). The interaction with SMO stretch occupies residues 357 to 478; that stretch reads QQKTGFKNLL…GPAGLVGAPT (122 aa).

Belongs to the DRC4 family. As to quaternary structure, component of the nexin-dynein regulatory complex (N-DRC). Interacts with microtubules. Interacts with SMO. Interacts (via coiled-coil domains) with RAB3B (in GTP-bound form). Interacts with DRC1. Interacts with DRC7. In terms of tissue distribution, highly expressed in adult testes and lung. Weakly or not expressed in other tested tissues.

It localises to the cytoplasm. Its subcellular location is the cytoskeleton. It is found in the cell projection. The protein resides in the cilium. The protein localises to the flagellum. It localises to the cilium axoneme. Its subcellular location is the cilium basal body. It is found in the golgi apparatus. The protein resides in the flagellum axoneme. In terms of biological role, component of the nexin-dynein regulatory complex (N-DRC), a key regulator of ciliary/flagellar motility which maintains the alignment and integrity of the distal axoneme and regulates microtubule sliding in motile axonemes. Plays an important role in the assembly of the N-DRC linker. Plays dual roles at both the primary (or non-motile) cilia to regulate hedgehog signaling and in motile cilia to coordinate cilia movement. Required for proper motile cilia functioning. Positively regulates ciliary smoothened (SMO)-dependent Hedgehog (Hh) signaling pathway by facilitating the trafficking of SMO into the cilium and the stimulation of SMO activity in a GRK2-dependent manner. May play a role in the spermatozoa motility. The polypeptide is Dynein regulatory complex subunit 4 (Gas8) (Mus musculus (Mouse)).